Reading from the N-terminus, the 344-residue chain is Dihydroorotate dehydrogenase (quinone) (344 aa).

FMN contacts are provided by residues 65–69 (AGLDK) and T89. Substrate is bound at residue K69. 114–118 (NRMGF) lines the substrate pocket. FMN-binding residues include N142 and N175. Residue N175 coordinates substrate. S178 (nucleophile) is an active-site residue. N180 contributes to the substrate binding site. FMN is bound by residues K220 and T248. 249–250 (NT) serves as a coordination point for substrate. FMN contacts are provided by residues G271, G300, and 321 to 322 (YT).

This sequence belongs to the dihydroorotate dehydrogenase family. Type 2 subfamily. Monomer. FMN serves as cofactor.

The protein localises to the cell membrane. The catalysed reaction is (S)-dihydroorotate + a quinone = orotate + a quinol. The protein operates within pyrimidine metabolism; UMP biosynthesis via de novo pathway; orotate from (S)-dihydroorotate (quinone route): step 1/1. Functionally, catalyzes the conversion of dihydroorotate to orotate with quinone as electron acceptor. In Paraburkholderia phymatum (strain DSM 17167 / CIP 108236 / LMG 21445 / STM815) (Burkholderia phymatum), this protein is Dihydroorotate dehydrogenase (quinone).